The following is a 297-amino-acid chain: Streptogrisin-A (297 aa).

The N-terminal stretch at 1–38 is a signal peptide; that stretch reads MTFKRFSPLSSTSRYARLLAVASGLVAAAALATPSAVA. The propeptide occupies 39–115; it reads APEAESKATV…VKRAEGKFTP (77 aa). C130 and C150 are disulfide-bonded. Catalysis depends on charge relay system residues H149, D171, and S253. C247 and C274 are disulfide-bonded.

It belongs to the peptidase S1 family. Monomer.

The enzyme catalyses Hydrolysis of proteins with specificity similar to chymotrypsin.. In terms of biological role, has a primary specificity for large aliphatic or aromatic amino acids. The polypeptide is Streptogrisin-A (sprA) (Streptomyces griseus).